The primary structure comprises 785 residues: Endonuclease MutS2 (785 aa).

332–339 (GPNTGGKT) is a binding site for ATP. Residues 710-785 (VDLRGMDSEE…GNGVTVVELK (76 aa)) form the Smr domain.

Belongs to the DNA mismatch repair MutS family. MutS2 subfamily. Homodimer. Binds to stalled ribosomes, contacting rRNA.

Functionally, endonuclease that is involved in the suppression of homologous recombination and thus may have a key role in the control of bacterial genetic diversity. Its function is as follows. Acts as a ribosome collision sensor, splitting the ribosome into its 2 subunits. Detects stalled/collided 70S ribosomes which it binds and splits by an ATP-hydrolysis driven conformational change. Acts upstream of the ribosome quality control system (RQC), a ribosome-associated complex that mediates the extraction of incompletely synthesized nascent chains from stalled ribosomes and their subsequent degradation. Probably generates substrates for RQC. In Clostridium novyi (strain NT), this protein is Endonuclease MutS2.